Here is a 294-residue protein sequence, read N- to C-terminus: Endolytic peptidoglycan transglycosylase RlpA (294 aa).

A signal peptide spans 1–23 (MKQKIFQILTALCCIFYVMSAQA). One can recognise an SPOR domain in the interval 216–291 (EKYTTVYKIR…NYSKPLIVYT (76 aa)).

Belongs to the RlpA family.

Lytic transglycosylase with a strong preference for naked glycan strands that lack stem peptides. The polypeptide is Endolytic peptidoglycan transglycosylase RlpA (Pasteurella multocida (strain Pm70)).